Here is a 328-residue protein sequence, read N- to C-terminus: GTP 3',8-cyclase (328 aa).

Residues 1 to 229 form the Radical SAM core domain; that stretch reads MNQVDYLRIS…ESQVRGAGPA (229 aa). Arg-8 lines the GTP pocket. Residues Cys-15 and Cys-19 each contribute to the [4Fe-4S] cluster site. S-adenosyl-L-methionine is bound at residue Tyr-21. Residue Cys-22 participates in [4Fe-4S] cluster binding. Arg-60 provides a ligand contact to GTP. Gly-64 is a binding site for S-adenosyl-L-methionine. Thr-91 is a binding site for GTP. Position 115 (Ser-115) interacts with S-adenosyl-L-methionine. Lys-155 is a binding site for GTP. Position 189 (Met-189) interacts with S-adenosyl-L-methionine. Residues Cys-252 and Cys-255 each coordinate [4Fe-4S] cluster. Residue 257–259 participates in GTP binding; sequence RMR. Cys-269 is a [4Fe-4S] cluster binding site.

The protein belongs to the radical SAM superfamily. MoaA family. Monomer and homodimer. [4Fe-4S] cluster serves as cofactor.

The enzyme catalyses GTP + AH2 + S-adenosyl-L-methionine = (8S)-3',8-cyclo-7,8-dihydroguanosine 5'-triphosphate + 5'-deoxyadenosine + L-methionine + A + H(+). Its pathway is cofactor biosynthesis; molybdopterin biosynthesis. Its function is as follows. Catalyzes the cyclization of GTP to (8S)-3',8-cyclo-7,8-dihydroguanosine 5'-triphosphate. The sequence is that of GTP 3',8-cyclase from Nostoc punctiforme (strain ATCC 29133 / PCC 73102).